The following is a 245-amino-acid chain: MDKTRTFLDVKEYPDTEVQKNRVLTLEEWQEKWVSRRIGFHQEQGHKLLKKHLDTFLKGENGLRVFFPLCGKAVEMKWFADRGHSVVGVEISELGIREFFAEQNLSYTEEPIVEIPGGKIFKSSSGNISLYCCSLFDLPRANIGKFDRIWDRGALVAINPGDRERYADIMLSLTRKGFHYLLAVLCYDPTKHAGPPFYVPEAEIKKLFGSICNIHCLEKVDVFEEQHKSWGIDYIIEKLYLFTEK.

29–40 (WQEKWVSRRIGF) provides a ligand contact to S-adenosyl-L-methionine. Phe-40 provides a ligand contact to substrate. At Lys-58 the chain carries N6-acetyllysine. Positions 69, 90, and 152 each coordinate S-adenosyl-L-methionine.

Belongs to the class I-like SAM-binding methyltransferase superfamily. TPMT family. As to quaternary structure, monomer.

It localises to the cytoplasm. It carries out the reaction S-adenosyl-L-methionine + a thiopurine = S-adenosyl-L-homocysteine + a thiopurine S-methylether.. This is Thiopurine S-methyltransferase (TPMT) from Canis lupus familiaris (Dog).